A 471-amino-acid polypeptide reads, in one-letter code: Glutamate--tRNA ligase (471 aa).

A 'HIGH' region motif is present at residues 9–19 (PSPTGYLHVGG). C98, C100, C125, and H127 together coordinate Zn(2+). Residues 237 to 241 (KLSKR) carry the 'KMSKS' region motif. Position 240 (K240) interacts with ATP.

This sequence belongs to the class-I aminoacyl-tRNA synthetase family. Glutamate--tRNA ligase type 1 subfamily. As to quaternary structure, monomer. Zn(2+) is required as a cofactor.

The protein localises to the cytoplasm. The catalysed reaction is tRNA(Glu) + L-glutamate + ATP = L-glutamyl-tRNA(Glu) + AMP + diphosphate. Its function is as follows. Catalyzes the attachment of glutamate to tRNA(Glu) in a two-step reaction: glutamate is first activated by ATP to form Glu-AMP and then transferred to the acceptor end of tRNA(Glu). The polypeptide is Glutamate--tRNA ligase (Shigella sonnei (strain Ss046)).